Reading from the N-terminus, the 332-residue chain is Adenosine deaminase (332 aa).

The Zn(2+) site is built by histidine 12 and histidine 14. Substrate contacts are provided by histidine 14, aspartate 16, and glycine 170. Histidine 197 serves as a coordination point for Zn(2+). Catalysis depends on glutamate 200, which acts as the Proton donor. Aspartate 278 provides a ligand contact to Zn(2+). Residue aspartate 279 coordinates substrate.

It belongs to the metallo-dependent hydrolases superfamily. Adenosine and AMP deaminases family. Adenosine deaminase subfamily. The cofactor is Zn(2+).

It catalyses the reaction adenosine + H2O + H(+) = inosine + NH4(+). It carries out the reaction 2'-deoxyadenosine + H2O + H(+) = 2'-deoxyinosine + NH4(+). Functionally, catalyzes the hydrolytic deamination of adenosine and 2-deoxyadenosine. In Yersinia enterocolitica serotype O:8 / biotype 1B (strain NCTC 13174 / 8081), this protein is Adenosine deaminase.